Reading from the N-terminus, the 194-residue chain is UPF0301 protein BPEN_258 (194 aa).

It belongs to the UPF0301 (AlgH) family.

The sequence is that of UPF0301 protein BPEN_258 from Blochmanniella pennsylvanica (strain BPEN).